We begin with the raw amino-acid sequence, 473 residues long: Histidinol dehydrogenase, chloroplastic (473 aa).

Residues 1 to 28 (MSLRPGRAHPLAASPLHTPLPARPRPQL) form a disordered region. Residues Tyr-162, Gln-224, and Asn-247 each coordinate NAD(+). Residues Ser-273, Gln-295, and His-298 each coordinate substrate. Zn(2+) is bound by residues Gln-295 and His-298. Catalysis depends on proton acceptor residues Glu-363 and His-364. Substrate contacts are provided by His-364, Asp-397, Glu-451, and His-456. Asp-397 contacts Zn(2+). His-456 contacts Zn(2+).

This sequence belongs to the histidinol dehydrogenase family. It depends on Zn(2+) as a cofactor.

Its subcellular location is the plastid. It localises to the chloroplast. The catalysed reaction is L-histidinol + 2 NAD(+) + H2O = L-histidine + 2 NADH + 3 H(+). It functions in the pathway amino-acid biosynthesis; L-histidine biosynthesis; L-histidine from 5-phospho-alpha-D-ribose 1-diphosphate: step 9/9. Its function is as follows. Catalyzes the sequential NAD-dependent oxidations of L-histidinol to L-histidinaldehyde and then to L-histidine. In Oryza sativa subsp. japonica (Rice), this protein is Histidinol dehydrogenase, chloroplastic (HDH).